Reading from the N-terminus, the 140-residue chain is Nucleoside diphosphate kinase (140 aa).

ATP-binding residues include K11, F59, R87, T93, R104, and N114. H117 functions as the Pros-phosphohistidine intermediate in the catalytic mechanism.

Belongs to the NDK family. Homotetramer. The cofactor is Mg(2+).

The protein localises to the cytoplasm. It catalyses the reaction a 2'-deoxyribonucleoside 5'-diphosphate + ATP = a 2'-deoxyribonucleoside 5'-triphosphate + ADP. It carries out the reaction a ribonucleoside 5'-diphosphate + ATP = a ribonucleoside 5'-triphosphate + ADP. In terms of biological role, major role in the synthesis of nucleoside triphosphates other than ATP. The ATP gamma phosphate is transferred to the NDP beta phosphate via a ping-pong mechanism, using a phosphorylated active-site intermediate. This is Nucleoside diphosphate kinase from Rhizobium rhizogenes (strain K84 / ATCC BAA-868) (Agrobacterium radiobacter).